Reading from the N-terminus, the 259-residue chain is Imidazole glycerol phosphate synthase subunit HisF (259 aa).

Residues aspartate 11 and aspartate 130 contribute to the active site.

This sequence belongs to the HisA/HisF family. In terms of assembly, heterodimer of HisH and HisF.

The protein localises to the cytoplasm. It carries out the reaction 5-[(5-phospho-1-deoxy-D-ribulos-1-ylimino)methylamino]-1-(5-phospho-beta-D-ribosyl)imidazole-4-carboxamide + L-glutamine = D-erythro-1-(imidazol-4-yl)glycerol 3-phosphate + 5-amino-1-(5-phospho-beta-D-ribosyl)imidazole-4-carboxamide + L-glutamate + H(+). It functions in the pathway amino-acid biosynthesis; L-histidine biosynthesis; L-histidine from 5-phospho-alpha-D-ribose 1-diphosphate: step 5/9. IGPS catalyzes the conversion of PRFAR and glutamine to IGP, AICAR and glutamate. The HisF subunit catalyzes the cyclization activity that produces IGP and AICAR from PRFAR using the ammonia provided by the HisH subunit. In Carboxydothermus hydrogenoformans (strain ATCC BAA-161 / DSM 6008 / Z-2901), this protein is Imidazole glycerol phosphate synthase subunit HisF.